Here is an 835-residue protein sequence, read N- to C-terminus: Protein translocase subunit SecA (835 aa).

Residues Q85, G103–T107, and D492 each bind ATP. Zn(2+) is bound by residues C819, C821, C830, and C831.

It belongs to the SecA family. Monomer and homodimer. Part of the essential Sec protein translocation apparatus which comprises SecA, SecYEG and auxiliary proteins SecDF. Other proteins may also be involved. Zn(2+) serves as cofactor.

Its subcellular location is the cell membrane. The protein localises to the cytoplasm. The catalysed reaction is ATP + H2O + cellular proteinSide 1 = ADP + phosphate + cellular proteinSide 2.. Functionally, part of the Sec protein translocase complex. Interacts with the SecYEG preprotein conducting channel. Has a central role in coupling the hydrolysis of ATP to the transfer of proteins into and across the cell membrane, serving as an ATP-driven molecular motor driving the stepwise translocation of polypeptide chains across the membrane. The chain is Protein translocase subunit SecA from Clostridium botulinum (strain Kyoto / Type A2).